We begin with the raw amino-acid sequence, 393 residues long: uncharacterized protein (393 aa).

The TRAM domain maps to 12 to 70 (APLLGSKIKLNIEKLAIGGAGVARHEGMVVFVPQAAPNEEILAEITLVKKNFMEARVVE). Positions 83, 89, 92, and 166 each coordinate [4Fe-4S] cluster. Gln-221, Tyr-250, Glu-273, and Asp-316 together coordinate S-adenosyl-L-methionine. Cys-343 serves as the catalytic Nucleophile.

Belongs to the class I-like SAM-binding methyltransferase superfamily. RNA M5U methyltransferase family.

This is an uncharacterized protein from Bdellovibrio bacteriovorus (strain ATCC 15356 / DSM 50701 / NCIMB 9529 / HD100).